Reading from the N-terminus, the 305-residue chain is Ribonuclease HIII (305 aa).

An RNase H type-2 domain is found at 91–305 (WSVIGSDEVG…ANTQKAQKLL (215 aa)). A divalent metal cation-binding residues include Asp-97, Glu-98, and Asp-201.

It belongs to the RNase HII family. RnhC subfamily. Requires Mn(2+) as cofactor. It depends on Mg(2+) as a cofactor.

It localises to the cytoplasm. It carries out the reaction Endonucleolytic cleavage to 5'-phosphomonoester.. In terms of biological role, endonuclease that specifically degrades the RNA of RNA-DNA hybrids. The polypeptide is Ribonuclease HIII (Enterococcus faecalis (strain ATCC 700802 / V583)).